We begin with the raw amino-acid sequence, 375 residues long: uncharacterized protein (375 aa).

The Radical SAM core domain maps to 78–302 (KKIEITSTIH…IFPNIRITSP (225 aa)). [4Fe-4S] cluster is bound by residues cysteine 92, cysteine 98, and cysteine 101.

Requires [4Fe-4S] cluster as cofactor.

This is an uncharacterized protein from Methanocaldococcus jannaschii (strain ATCC 43067 / DSM 2661 / JAL-1 / JCM 10045 / NBRC 100440) (Methanococcus jannaschii).